The primary structure comprises 202 residues: Na(+)-translocating NADH-quinone reductase subunit E (202 aa).

6 helical membrane-spanning segments follow: residues 11–31 (SIFL…FLAV), 39–59 (MGLG…NQLV), 79–99 (LSFL…QILE), 114–134 (GIFL…AFAV), 144–164 (IFYG…LAAV), and 180–200 (LGSV…FSGV).

The protein belongs to the NqrDE/RnfAE family. In terms of assembly, composed of six subunits; NqrA, NqrB, NqrC, NqrD, NqrE and NqrF.

It localises to the cell inner membrane. It carries out the reaction a ubiquinone + n Na(+)(in) + NADH + H(+) = a ubiquinol + n Na(+)(out) + NAD(+). NQR complex catalyzes the reduction of ubiquinone-1 to ubiquinol by two successive reactions, coupled with the transport of Na(+) ions from the cytoplasm to the periplasm. NqrA to NqrE are probably involved in the second step, the conversion of ubisemiquinone to ubiquinol. This Pseudoalteromonas atlantica (strain T6c / ATCC BAA-1087) protein is Na(+)-translocating NADH-quinone reductase subunit E.